We begin with the raw amino-acid sequence, 173 residues long: Cytochrome c-type biogenesis protein CcmE (173 aa).

Residues 1 to 8 (MNPRRKSR) are Cytoplasmic-facing. A helical; Signal-anchor for type II membrane protein transmembrane segment spans residues 9 to 29 (FKLVIFVVLGIAIASGLMLYA). The Periplasmic segment spans residues 30–173 (LRQNIDLFYT…RDRQEKEGAK (144 aa)). Heme contacts are provided by His131 and Tyr135. The disordered stretch occupies residues 152–173 (GIEAADLKGESARDRQEKEGAK). The span at 156-173 (ADLKGESARDRQEKEGAK) shows a compositional bias: basic and acidic residues.

It belongs to the CcmE/CycJ family.

Its subcellular location is the cell inner membrane. Heme chaperone required for the biogenesis of c-type cytochromes. Transiently binds heme delivered by CcmC and transfers the heme to apo-cytochromes in a process facilitated by CcmF and CcmH. This Haemophilus influenzae (strain ATCC 51907 / DSM 11121 / KW20 / Rd) protein is Cytochrome c-type biogenesis protein CcmE.